The chain runs to 60 residues: Large ribosomal subunit protein bL32 (60 aa).

The protein belongs to the bacterial ribosomal protein bL32 family.

The chain is Large ribosomal subunit protein bL32 from Pediococcus pentosaceus (strain ATCC 25745 / CCUG 21536 / LMG 10740 / 183-1w).